The primary structure comprises 69 residues: Small cysteine-rich protein (69 aa).

A signal peptide spans 1–19; sequence MKLQLCLVLLLLGVLYVQS. The propeptide occupies 20–22; it reads VPE.

The protein belongs to the Cnidaria small cysteine-rich protein (SCRiP) family. delta subfamily. Post-translationally, contains 4 disulfide bonds.

Its subcellular location is the secreted. The protein localises to the nematocyst. Induces neurotoxic symptoms on zebrafish. Has also been claimed to be implied in calcification, but this function seems improbable. The protein is Small cysteine-rich protein of Metridium senile (Brown sea anemone).